The following is a 256-amino-acid chain: 5-keto-4-deoxy-D-glucarate aldolase (256 aa).

The active-site Proton acceptor is H50. Residue Q151 participates in substrate binding. Mg(2+) is bound at residue E153. Substrate-binding residues include S178 and D179. Residue D179 participates in Mg(2+) binding.

This sequence belongs to the HpcH/HpaI aldolase family. KDGluc aldolase subfamily. Homohexamer; trimer of dimers. Mg(2+) serves as cofactor.

It catalyses the reaction 5-dehydro-4-deoxy-D-glucarate = 2-hydroxy-3-oxopropanoate + pyruvate. The catalysed reaction is 2-dehydro-3-deoxy-D-glucarate = 2-hydroxy-3-oxopropanoate + pyruvate. Its pathway is carbohydrate acid metabolism; galactarate degradation; D-glycerate from galactarate: step 2/3. Its function is as follows. Catalyzes the reversible retro-aldol cleavage of both 5-keto-4-deoxy-D-glucarate and 2-keto-3-deoxy-D-glucarate to pyruvate and tartronic semialdehyde. The polypeptide is 5-keto-4-deoxy-D-glucarate aldolase (Escherichia coli (strain K12 / DH10B)).